The following is a 661-amino-acid chain: UvrABC system protein B (661 aa).

The 158-residue stretch at 25-182 (KGLNNKKRSQ…NDLVNLQYER (158 aa)) folds into the Helicase ATP-binding domain. 38–45 (GITGSGKT) serves as a coordination point for ATP. Positions 91-114 (YYDYYQPEAYIPKTDVFIEKDSSI) match the Beta-hairpin motif. A Helicase C-terminal domain is found at 430–592 (QVEDLVGEIQ…IIPKTINRTI (163 aa)). One can recognise a UVR domain in the interval 621 to 656 (KAHIDKLRKEMLKAASNLEFEQAAKLRDQLKTLEEA).

This sequence belongs to the UvrB family. As to quaternary structure, forms a heterotetramer with UvrA during the search for lesions. Interacts with UvrC in an incision complex.

It localises to the cytoplasm. In terms of biological role, the UvrABC repair system catalyzes the recognition and processing of DNA lesions. A damage recognition complex composed of 2 UvrA and 2 UvrB subunits scans DNA for abnormalities. Upon binding of the UvrA(2)B(2) complex to a putative damaged site, the DNA wraps around one UvrB monomer. DNA wrap is dependent on ATP binding by UvrB and probably causes local melting of the DNA helix, facilitating insertion of UvrB beta-hairpin between the DNA strands. Then UvrB probes one DNA strand for the presence of a lesion. If a lesion is found the UvrA subunits dissociate and the UvrB-DNA preincision complex is formed. This complex is subsequently bound by UvrC and the second UvrB is released. If no lesion is found, the DNA wraps around the other UvrB subunit that will check the other stand for damage. The polypeptide is UvrABC system protein B (Rickettsia bellii (strain OSU 85-389)).